Reading from the N-terminus, the 215-residue chain is MKYQLTALEARVIGCLLEKQVTTPEQYPLSVNGVVTACNQKTNREPVMNLSESEVQEQLDNLVKRHYLRTVSGFGNRVTKYEQRFCNSEFGDLKLSAAEVALITTLLLRGAQTPGELRSRAARMYEFSDMAEVESTLEQLANREDGPFVVRLAREPGKRESRYMHLFSGEVEDQPAVTAMSNMVDGDLQTRVEALEIEVAELKQRLDSLLAHLGD.

An N6-acetyllysine modification is found at Lys-80.

This sequence belongs to the UPF0502 family.

The protein is UPF0502 protein YceH of Shigella flexneri serotype 5b (strain 8401).